A 412-amino-acid polypeptide reads, in one-letter code: CinA-like protein (412 aa).

Belongs to the CinA family.

The sequence is that of CinA-like protein from Kosmotoga olearia (strain ATCC BAA-1733 / DSM 21960 / TBF 19.5.1).